A 71-amino-acid polypeptide reads, in one-letter code: DNA-directed RNA polymerase subunit omega (71 aa).

The protein belongs to the RNA polymerase subunit omega family. The RNAP catalytic core consists of 2 alpha, 1 beta, 1 beta' and 1 omega subunit. When a sigma factor is associated with the core the holoenzyme is formed, which can initiate transcription.

The enzyme catalyses RNA(n) + a ribonucleoside 5'-triphosphate = RNA(n+1) + diphosphate. Functionally, promotes RNA polymerase assembly. Latches the N- and C-terminal regions of the beta' subunit thereby facilitating its interaction with the beta and alpha subunits. This Campylobacter concisus (strain 13826) protein is DNA-directed RNA polymerase subunit omega.